We begin with the raw amino-acid sequence, 516 residues long: UDP-N-acetylmuramyl-tripeptide synthetase (516 aa).

S38 lines the UDP-N-acetyl-alpha-D-muramoyl-L-alanyl-D-glutamate pocket. G116 to T122 lines the ATP pocket. UDP-N-acetyl-alpha-D-muramoyl-L-alanyl-D-glutamate is bound by residues T162–T163, S189, and R197. At K231 the chain carries N6-carboxylysine.

It belongs to the MurCDEF family. MurE subfamily. In terms of processing, carboxylation is probably crucial for Mg(2+) binding and, consequently, for the gamma-phosphate positioning of ATP.

The protein resides in the cytoplasm. It participates in cell wall biogenesis; peptidoglycan biosynthesis. Its function is as follows. Catalyzes the addition of an amino acid to the nucleotide precursor UDP-N-acetylmuramoyl-L-alanyl-D-glutamate (UMAG) in the biosynthesis of bacterial cell-wall peptidoglycan. This is UDP-N-acetylmuramyl-tripeptide synthetase from Lactobacillus delbrueckii subsp. bulgaricus (strain ATCC 11842 / DSM 20081 / BCRC 10696 / JCM 1002 / NBRC 13953 / NCIMB 11778 / NCTC 12712 / WDCM 00102 / Lb 14).